We begin with the raw amino-acid sequence, 280 residues long: Maltodextrin transport system permease protein MalD (280 aa).

The next 6 helical transmembrane spans lie at 15–35, 77–97, 110–130, 142–162, 200–220, and 244–264; these read LTYL…LITI, LIIA…AGYA, LVFF…AFFV, WFLI…LMKG, VQAL…SFLL, and IAYF…LFFF. An ABC transmembrane type-1 domain is found at 73–265; that stretch reads YLNTLIIALI…LPICILFFFL (193 aa).

This sequence belongs to the binding-protein-dependent transport system permease family. MalFG subfamily.

It is found in the cell membrane. Part of the binding-protein-dependent transport system for maltodextrin; probably responsible for the translocation of the substrate across the membrane. The sequence is that of Maltodextrin transport system permease protein MalD (malD) from Streptococcus pneumoniae (strain ATCC BAA-255 / R6).